Reading from the N-terminus, the 226-residue chain is EEF1A lysine methyltransferase 1 (226 aa).

S2 carries the post-translational modification N-acetylserine. S2 carries the post-translational modification Phosphoserine.

It belongs to the class I-like SAM-binding methyltransferase superfamily. EFM5 family.

It is found in the cytoplasm. The enzyme catalyses L-lysyl-[protein] + 3 S-adenosyl-L-methionine = N(6),N(6),N(6)-trimethyl-L-lysyl-[protein] + 3 S-adenosyl-L-homocysteine + 3 H(+). Protein-lysine methyltransferase that selectively catalyzes the trimethylation of EEF1A at 'Lys-79'. The polypeptide is EEF1A lysine methyltransferase 1 (Bos taurus (Bovine)).